We begin with the raw amino-acid sequence, 340 residues long: Guanine nucleotide-binding protein subunit beta-1 (340 aa).

Position 29 is a phosphoserine (Ser29). WD repeat units follow at residues 53-92 (GHLA…KVHA), 95-134 (LRSS…GNVR), 141-179 (GHGG…QVTS), 182-221 (GHTG…CKQT), 224-263 (GHES…ELAM), 268-307 (NIIC…RSGI), and 310-340 (GHDN…RVWN).

It belongs to the WD repeat G protein beta family. G proteins are composed of 3 units, alpha, beta and gamma. As to expression, expressed in the brain neuropil and cortex, and the thoracic ganglion (at protein level). Expression detected in eye at protein level but not at mRNA level, suggesting cross reactivity of antibodies to the similar Gbeta76C protein.

Guanine nucleotide-binding proteins (G proteins) are involved as a modulator or transducer in various transmembrane signaling systems. The beta and gamma chains are required for the GTPase activity, for replacement of GDP by GTP, and for G protein-effector interaction. This is Guanine nucleotide-binding protein subunit beta-1 (Gbeta13F) from Drosophila melanogaster (Fruit fly).